The primary structure comprises 611 residues: Muscarinic acetylcholine receptor gar-3 (611 aa).

Over 1–67 (MQSSSLGNAD…LLGEEGRMVM (67 aa)) the chain is Extracellular. Asn-28 and Asn-33 each carry an N-linked (GlcNAc...) asparagine glycan. The helical transmembrane segment at 68–88 (IVVIGAMFALVTSLGNLMVMV) threads the bilayer. The Cytoplasmic segment spans residues 89 to 101 (SFKIDKQLQTISN). Residues 102–122 (YFLFSLAVADIAIGVISIPMF) traverse the membrane as a helical segment. Topologically, residues 123–140 (TYYTAIQKWDLGYTMCQF) are extracellular. A disulfide bond links Cys-138 and Cys-218. The chain crosses the membrane as a helical span at residues 141 to 161 (WLCIDYLMSNASVLNLLLISF). At 162–181 (DRYFSVTRPLSYRPRRTTKK) the chain is on the cytoplasmic side. Residues 182–202 (ALTMIACTYIISLILWPPWII) traverse the membrane as a helical segment. At 203-227 (SWPYIEGKFTAEPGTCVVQFLQTNP) the chain is on the extracellular side. The helical transmembrane segment at 228–248 (YVTVGTAVAAFYLPVTIMCIL) threads the bilayer. Over 249–525 (YTRVYWETQK…RKQESKAAKT (277 aa)) the chain is Cytoplasmic. 4 disordered regions span residues 299–364 (RRSM…SSEA), 377–432 (SHFA…NNNS), 446–477 (SRPS…NSEI), and 500–519 (FSSQ…RKQE). Residues 307–317 (SSTSIIKSSGS) are compositionally biased toward low complexity. Residues 503 to 519 (QERKSEKEQRKNERKQE) are compositionally biased toward basic and acidic residues. A helical membrane pass occupies residues 526-546 (LSAILCAFIATWTPYNLIVCW). The Extracellular segment spans residues 547–557 (EAFFPNTVPNV). A helical transmembrane segment spans residues 558–578 (LWTFSYFLCYINSTINPLCYA). The Cytoplasmic portion of the chain corresponds to 579–611 (LCNARFRHTYMRILRCKFKAERPTMNQGYVRRN).

It belongs to the G-protein coupled receptor 1 family. Muscarinic acetylcholine receptor subfamily.

It localises to the cell membrane. The muscarinic acetylcholine receptor mediates various cellular responses, including inhibition of adenylate cyclase, breakdown of phosphoinositides and modulation of potassium channels through the action of G proteins. Primary transducing effect is Pi turnover. Enhances the release of the neurotransmitter acetlycholine in cholinergic motor neurons, which in turn positively feeds back to depolarize body wall muscles and allows for the maintenance of normal body posture and locomotion. The sequence is that of Muscarinic acetylcholine receptor gar-3 (gar-3) from Caenorhabditis elegans.